The sequence spans 1137 residues: Eukaryotic translation initiation factor 3 subunit A (1137 aa).

Positions 319–501 (LQRMAAHVLL…NSIYFGTDLT (183 aa)) constitute a PCI domain. Basic and acidic residues-rich tracts occupy residues 588–623 (QNNA…EERE) and 829–899 (AAEE…RGGD). Disordered regions lie at residues 588-631 (QNNA…QNEI) and 829-1137 (AAEE…VKRR). A Phosphoserine modification is found at Ser908. Composition is skewed to basic and acidic residues over residues 922 to 971 (RGIE…EPDS), 985 to 1046 (SRDE…EPQR), 1054 to 1083 (DAPR…RGDQ), and 1106 to 1127 (AREE…KAAD).

Belongs to the eIF-3 subunit A family. In terms of assembly, component of the eukaryotic translation initiation factor 3 (eIF-3) complex. The eIF-3 complex interacts with pix.

The protein resides in the cytoplasm. RNA-binding component of the eukaryotic translation initiation factor 3 (eIF-3) complex, which is involved in protein synthesis of a specialized repertoire of mRNAs and, together with other initiation factors, stimulates binding of mRNA and methionyl-tRNAi to the 40S ribosome. The eIF-3 complex specifically targets and initiates translation of a subset of mRNAs involved in cell proliferation. In Drosophila yakuba (Fruit fly), this protein is Eukaryotic translation initiation factor 3 subunit A.